The primary structure comprises 342 residues: MRDVVRFINPYDPGLFPEDFPDKEVVNLSSNENPYEPSEEVREAYLRAVKYIPRYPKADYARLKKALAEYTGFEVENIAVGCGASELISCICNVLLEELDRVVIPMPSYTLYSIYAMLRSASISFPVFEGYRVDPDVIAEERPKLVFLCSPNNPTGNSLSREIVQKVAESAEYVVLDEAYVEFSDDSKIEMVRDYNNLIVLRSFSKFFGLAGMRVGYAVCSAEIAEAIEKVRLPFGISYPAVETAIAALRSLDYYKKVRDRIVRERERLIEKLKEIEWLEVYPSDANFVLVKANKEGVVEKLAEKGFIVRDASVMGLEGLYIRITVGKREDNDRLIEALREI.

At Lys206 the chain carries N6-(pyridoxal phosphate)lysine.

Belongs to the class-II pyridoxal-phosphate-dependent aminotransferase family. Histidinol-phosphate aminotransferase subfamily. Pyridoxal 5'-phosphate is required as a cofactor.

The catalysed reaction is L-histidinol phosphate + 2-oxoglutarate = 3-(imidazol-4-yl)-2-oxopropyl phosphate + L-glutamate. Its pathway is amino-acid biosynthesis; L-histidine biosynthesis; L-histidine from 5-phospho-alpha-D-ribose 1-diphosphate: step 7/9. This Archaeoglobus fulgidus (strain ATCC 49558 / DSM 4304 / JCM 9628 / NBRC 100126 / VC-16) protein is Histidinol-phosphate aminotransferase 2 (hisC2).